The primary structure comprises 189 residues: uncharacterized protein (189 aa).

The 174-residue stretch at 1-174 folds into the Macro domain; the sequence is MKCWTLGDRV…GMEKGVREAL (174 aa).

This is an uncharacterized protein from Aeropyrum pernix (strain ATCC 700893 / DSM 11879 / JCM 9820 / NBRC 100138 / K1).